Reading from the N-terminus, the 71-residue chain is Calcium dodecin (71 aa).

Glu18 is a Ca(2+) binding site.

This sequence belongs to the dodecin family. Homododecamer; 12 subunits assemble to form a hollow sphere with a diameter of about 75 Angstroms. Calcium ions are bound at the interface between three subunits.

Its function is as follows. Binds calcium ions. May play a role in sequestering additional small ligands. The protein is Calcium dodecin (secE2) of Mycobacterium tuberculosis (strain ATCC 25618 / H37Rv).